We begin with the raw amino-acid sequence, 199 residues long: WASH complex subunit 3 (199 aa).

Positions 47-76 form a coiled coil; that stretch reads VCEEKLSALSLRIQQIETTLNILEAKLSSI. Residues 93–120 are compositionally biased toward polar residues; it reads NISNGHLPSQPDAQSVVVSPQSDNNSMN. Disordered regions lie at residues 93 to 136 and 170 to 199; these read NISN…NITT and PDLL…SFSD. Over residues 183–192 the composition is skewed to acidic residues; sequence GEPEAEESSD.

It belongs to the CCDC53 family. In terms of assembly, component of the WASH complex.

This is WASH complex subunit 3 from Xenopus laevis (African clawed frog).